A 375-amino-acid chain; its full sequence is Carbamoyl phosphate synthase small chain (375 aa).

A CPSase region spans residues 1-185 (MTQPAILVLE…LNANAFVQAE (185 aa)). Ser47, Gly237, and Gly239 together coordinate L-glutamine. Residues 189-375 (KVVAYDYGVK…FVASMAEAKS (187 aa)) form the Glutamine amidotransferase type-1 domain. Residue Cys265 is the Nucleophile of the active site. 5 residues coordinate L-glutamine: Leu266, Gln269, Asn307, Gly309, and Phe310. Residues His349 and Glu351 contribute to the active site.

The protein belongs to the CarA family. In terms of assembly, composed of two chains; the small (or glutamine) chain promotes the hydrolysis of glutamine to ammonia, which is used by the large (or ammonia) chain to synthesize carbamoyl phosphate. Tetramer of heterodimers (alpha,beta)4.

The catalysed reaction is hydrogencarbonate + L-glutamine + 2 ATP + H2O = carbamoyl phosphate + L-glutamate + 2 ADP + phosphate + 2 H(+). The enzyme catalyses L-glutamine + H2O = L-glutamate + NH4(+). The protein operates within amino-acid biosynthesis; L-arginine biosynthesis; carbamoyl phosphate from bicarbonate: step 1/1. It participates in pyrimidine metabolism; UMP biosynthesis via de novo pathway; (S)-dihydroorotate from bicarbonate: step 1/3. Its function is as follows. Small subunit of the glutamine-dependent carbamoyl phosphate synthetase (CPSase). CPSase catalyzes the formation of carbamoyl phosphate from the ammonia moiety of glutamine, carbonate, and phosphate donated by ATP, constituting the first step of 2 biosynthetic pathways, one leading to arginine and/or urea and the other to pyrimidine nucleotides. The small subunit (glutamine amidotransferase) binds and cleaves glutamine to supply the large subunit with the substrate ammonia. The protein is Carbamoyl phosphate synthase small chain of Xanthomonas campestris pv. campestris (strain ATCC 33913 / DSM 3586 / NCPPB 528 / LMG 568 / P 25).